The chain runs to 931 residues: Short transient receptor potential channel 6 (931 aa).

A disordered region spans residues 1-24; that stretch reads MNQSPAAFGPRRGGSPAVVAGAGA. Over 1–406 the chain is Cytoplasmic; the sequence is MNQSPAAFGP…GLRQQTMAVK (406 aa). The segment covering 13–24 has biased composition (low complexity); that stretch reads GGSPAVVAGAGA. 3 ANK repeats span residues 131-160, 162-188, and 217-246; these read MGQN…LSRV, DALL…FAEG, and HDVT…RIER. A helical transmembrane segment spans residues 407-427; sequence FLVVLAVAVGLPFLALVYWFA. Residues 428-438 are Extracellular-facing; that stretch reads PCSKMGKIMRG. The chain crosses the membrane as a helical span at residues 439–459; it reads PFMKFVAHAASFTIFLGLLVM. The Cytoplasmic portion of the chain corresponds to 460-487; it reads NAADRFEGTKILPNETSTDHAKQLFRMK. Residues 488-508 traverse the membrane as a helical segment; that stretch reads TSCFSWMEMLIISWVIGMIWA. Over 509 to 521 the chain is Extracellular; it reads ECKEIWTQGPKEY. Residues 522-542 form a helical membrane-spanning segment; the sequence is LFELWNMLDFGMLAIFAASFI. Topologically, residues 543-592 are cytoplasmic; the sequence is ARFMAFWHASKAQSIIDANDTLKDLTKVTLGDNVKYYNLARIKWDPSDPQ. Residues 593-613 traverse the membrane as a helical segment; it reads IISEGLYAIAVVLSFSRIAYI. At 614–636 the chain is on the extracellular side; sequence LPANESFGPLQISLGRTVKDIFK. Asparagine 617 is a glycosylation site (N-linked (GlcNAc...) asparagine). The ANK 4 repeat unit spans residues 618 to 647; that stretch reads ESFGPLQISLGRTVKDIFKFMVIFIMVFVA. A helical transmembrane segment spans residues 637–657; that stretch reads FMVIFIMVFVAFMIGMFNLYS. At 658–674 the chain is on the cytoplasmic side; sequence YYIGAKQNEAFTTVEES. The helical transmembrane segment at 675 to 695 threads the bilayer; it reads FKTLFWAIFGLSEVKSVVINY. Over 696–706 the chain is Extracellular; sequence NHKFIENIGYV. A helical transmembrane segment spans residues 707–727; sequence LYGVYNVTMVIVLLNMLIAMI. Residues 728 to 931 are Cytoplasmic-facing; that stretch reads NSSFQEIEDD…MEPNQEESNR (204 aa). Serine 815 is subject to Phosphoserine.

It belongs to the transient receptor (TC 1.A.4) family. STrpC subfamily. TRPC6 sub-subfamily. In terms of assembly, homodimer; forms channel complex. Interacts with MX1 and RNF24. Post-translationally, phosphorylated by FYN, leading to an increase of TRPC6 channel activity.

The protein resides in the cell membrane. The enzyme catalyses Ca(2+)(in) = Ca(2+)(out). Thought to form a receptor-activated non-selective calcium permeant cation channel. Probably is operated by a phosphatidylinositol second messenger system activated by receptor tyrosine kinases or G-protein coupled receptors. Activated by diacylglycerol (DAG) in a membrane-delimited fashion, independently of protein kinase C. Seems not to be activated by intracellular calcium store depletion. This Bos taurus (Bovine) protein is Short transient receptor potential channel 6.